The primary structure comprises 134 residues: FK506-binding protein 2 (134 aa).

A signal peptide spans methionine 1–serine 19. The region spanning glycine 39–glutamate 127 is the PPIase FKBP-type domain. A Prevents secretion from ER motif is present at residues asparagine 131 to leucine 134.

It belongs to the FKBP-type PPIase family. FKBP2 subfamily.

It localises to the endoplasmic reticulum. It carries out the reaction [protein]-peptidylproline (omega=180) = [protein]-peptidylproline (omega=0). Inhibited by both FK506 and rapamycin. In terms of biological role, PPIases accelerate the folding of proteins. It catalyzes the cis-trans isomerization of proline imidic peptide bonds in oligopeptides. The sequence is that of FK506-binding protein 2 (fpr2) from Aspergillus fumigatus (strain ATCC MYA-4609 / CBS 101355 / FGSC A1100 / Af293) (Neosartorya fumigata).